The chain runs to 263 residues: Shikimate dehydrogenase (NADP(+)) (263 aa).

Residues 21–23 (TLS) and Thr67 contribute to the shikimate site. The active-site Proton acceptor is the Lys71. Glu83 contacts NADP(+). 2 residues coordinate shikimate: Asn92 and Asp103. Residues 126–130 (GAGGA) and Leu204 each bind NADP(+). Tyr206 provides a ligand contact to shikimate. Residue Gly227 participates in NADP(+) binding.

The protein belongs to the shikimate dehydrogenase family. In terms of assembly, homodimer.

It carries out the reaction shikimate + NADP(+) = 3-dehydroshikimate + NADPH + H(+). It participates in metabolic intermediate biosynthesis; chorismate biosynthesis; chorismate from D-erythrose 4-phosphate and phosphoenolpyruvate: step 4/7. In terms of biological role, involved in the biosynthesis of the chorismate, which leads to the biosynthesis of aromatic amino acids. Catalyzes the reversible NADPH linked reduction of 3-dehydroshikimate (DHSA) to yield shikimate (SA). This Sulfolobus acidocaldarius (strain ATCC 33909 / DSM 639 / JCM 8929 / NBRC 15157 / NCIMB 11770) protein is Shikimate dehydrogenase (NADP(+)).